The sequence spans 363 residues: Aspartate-semialdehyde dehydrogenase (363 aa).

Residues threonine 15, glycine 16, serine 17, valine 18, serine 40, serine 43, and leucine 87 each coordinate NADP(+). Catalysis depends on cysteine 154, which acts as the Acyl-thioester intermediate. Glycine 186 serves as a coordination point for NADP(+). The Proton acceptor role is filled by histidine 251. Residue asparagine 341 participates in NADP(+) binding.

This sequence belongs to the aspartate-semialdehyde dehydrogenase family. Homotetramer; dimer of dimers.

Its subcellular location is the cytoplasm. The protein localises to the cytosol. The protein resides in the nucleus. It carries out the reaction L-aspartate 4-semialdehyde + phosphate + NADP(+) = 4-phospho-L-aspartate + NADPH + H(+). It participates in amino-acid biosynthesis; L-methionine biosynthesis via de novo pathway; L-homoserine from L-aspartate: step 2/3. It functions in the pathway amino-acid biosynthesis; L-threonine biosynthesis; L-threonine from L-aspartate: step 2/5. Its activity is regulated as follows. Inhibited by 4-amino-3-hydroxynaphthalene-1-sulfonic acid and the competitive inhibitor 1,4-benzoquinone and derivates such as 2-chloro-3-methoxy-1,4-naphthoquinone, 2,3-dichloro-1,4-naphthoquinone, 2-chloro-1,4-naphthoquinone, 2-bromo-1,4-naphthoquinone and 2,3-dichloro-5,8-dihydroxy-1,4-naphthoquinone. In terms of biological role, catalyzes the NADPH-dependent formation of L-aspartate 4-semialdehyde (L-ASA) by the reductive dephosphorylation of 4-phospho-L-aspartate. Mediates the second step in the biosynthesis of amino acids that derive from aspartate (the aspartate family of amino acids), including methioinine and threonine, the latter of which is a precursor to isoleucine. The sequence is that of Aspartate-semialdehyde dehydrogenase from Aspergillus fumigatus (strain ATCC MYA-4609 / CBS 101355 / FGSC A1100 / Af293) (Neosartorya fumigata).